The primary structure comprises 1042 residues: Sarcoplasmic/endoplasmic reticulum calcium ATPase 2 (1042 aa).

The Cytoplasmic segment spans residues 1-48 (MENAHTKTVEEVLGHFGVNESTGLSLEQVKKLKERWGSNELPAEEGKT). Ser38 carries the post-translational modification Phosphoserine. A helical transmembrane segment spans residues 49–69 (LLELVIEQFEDLLVRILLLAA). Over 70-89 (CISFVLAWFEEGEETITAFV) the chain is Lumenal. Residues 90-110 (EPFVILLILVANAIVGVWQER) form a helical membrane-spanning segment. Residues 111 to 253 (NAENAIEALK…QERTPLQQKL (143 aa)) lie on the Cytoplasmic side of the membrane. Residues 254-273 (DEFGEQLSKVISLICIAVWI) traverse the membrane as a helical segment. Topologically, residues 274–295 (INIGHFNDPVHGGSWIRGAIYY) are lumenal. 3'-nitrotyrosine occurs at positions 294 and 295. A helical membrane pass occupies residues 296-313 (FKIAVALAVAAIPEGLPA). Ca(2+) contacts are provided by Val304, Ala305, Ile307, and Glu309. Residues 314 to 756 (VITTCLALGT…EEGRAIYNNM (443 aa)) lie on the Cytoplasmic side of the membrane. The active-site 4-aspartylphosphate intermediate is the Asp351. Positions 351 and 353 each coordinate Mg(2+). Thr353 provides a ligand contact to ATP. Position 441 is a phosphothreonine (Thr441). Residues Glu442, Arg489, and Lys514 each coordinate ATP. Ser531 is subject to Phosphoserine. Residue Arg559 coordinates ATP. The tract at residues 575–594 (MHLKDSANFIKYETNLTFVG) is interaction with HAX1. Ser580 is subject to Phosphoserine. Thr624, Gly625, and Asp626 together coordinate ATP. Ser663 carries the phosphoserine modification. Arg677 and Lys683 together coordinate ATP. Residue Asp702 coordinates Mg(2+). Asn705 provides a ligand contact to ATP. Residues 757–776 (KQFIRYLISSNVGEVVCIFL) traverse the membrane as a helical segment. 2 residues coordinate Ca(2+): Asn767 and Glu770. Residues 777–786 (TAALGFPEAL) are Lumenal-facing. Residues 787–807 (IPVQLLWVNLVTDGLPATALG) traverse the membrane as a helical segment. The interaction with PLN stretch occupies residues 787–807 (IPVQLLWVNLVTDGLPATALG). Positions 788–1042 (PVQLLWVNLV…DTNFSDLLWS (255 aa)) are interaction with TMEM64 and PDIA3. Residues Asn795, Thr798, and Asp799 each coordinate Ca(2+). The Cytoplasmic portion of the chain corresponds to 808–827 (FNPPDLDIMNKPPRNPKEPL). A helical transmembrane segment spans residues 828 to 850 (ISGWLFFRYLAIGCYVGAATVGA). Topologically, residues 851–896 (AAWWFIAADGGPRVSFYQLSHFLQCKEDNPDFEGVDCAIFESPYPM) are lumenal. Cys875 and Cys887 are disulfide-bonded. The chain crosses the membrane as a helical span at residues 897-916 (TMALSVLVTIEMCNALNSLS). Position 907 (Glu907) interacts with Ca(2+). Residues 917-929 (ENQSLLRMPPWEN) are Cytoplasmic-facing. A helical membrane pass occupies residues 930-948 (IWLVGSICLSMSLHFLILY). An interaction with PLN region spans residues 931-942 (WLVGSICLSMSL). Residues 949-963 (VEPLPLIFQITPLNV) lie on the Lumenal side of the membrane. The helical transmembrane segment at 964 to 984 (TQWLMVLKISLPVILMDETLK) threads the bilayer. Residues 985–1042 (FVARNYLEPGKECVQPAPQSCSLWACTEGVSWPFVLLIVPLVMWVYSTDTNFSDLLWS) lie on the Cytoplasmic side of the membrane.

Belongs to the cation transport ATPase (P-type) (TC 3.A.3) family. Type IIA subfamily. In terms of assembly, interacts with sarcolipin (SLN); the interaction inhibits ATP2A2 Ca(2+) affinity. Interacts with phospholamban (PLN); the interaction inhibits ATP2A2 Ca(2+) affinity. Interacts with myoregulin (MRLN). Interacts with ARLN and ERLN; the interactions inhibit ATP2A2 Ca(2+) affinity. Interacts with SRTIT1/DWORF; the interaction results in activation of ATP2A2. Interacts with the monomeric forms of SLN, PLN, ARLN, ERLN and STRI1/DWORF. Interacts with HAX1. Interacts with S100A8 and S100A9. Interacts with SLC35G1 and STIM1. Interacts with TMEM203. Interacts with TMEM64 and PDIA3. Interacts with TMX1. Interacts with TMX2. Interacts with VMP1; VMP1 competes with PLN and SLN to prevent them from forming an inhibitory complex with ATP2A2. Interacts with ULK1. Interacts with TUNAR. Interacts with FLVCR2; this interaction occurs in the absence of heme and promotes ATP2A2 proteasomal degradation; this complex is dissociated upon heme binding. Interacts with FNIP1. As to quaternary structure, interacts with TRAM2 (via C-terminus). It depends on Mg(2+) as a cofactor. In terms of processing, nitrated under oxidative stress. Nitration on the two tyrosine residues inhibits catalytic activity. Post-translationally, serotonylated on Gln residues by TGM2 in response to hypoxia, leading to its inactivation. Isoform 2 is highly expressed in heart and slow twitch skeletal muscle. Isoform 1 is widely expressed.

It is found in the endoplasmic reticulum membrane. It localises to the sarcoplasmic reticulum membrane. The catalysed reaction is Ca(2+)(in) + ATP + H2O = Ca(2+)(out) + ADP + phosphate + H(+). Its activity is regulated as follows. Has different conformational states with differential Ca2+ affinity. The E1 conformational state (active form) shows high Ca(2+) affinity, while the E2 state exhibits low Ca(2+) affinity. Binding of ATP allosterically increases its affinity for subsequent binding of Ca2+. Reversibly inhibited by phospholamban (PLN) at low calcium concentrations. PLN inhibits ATP2A2 Ca(2+) affinity by disrupting its allosteric activation by ATP. Inhibited by sarcolipin (SLN) and myoregulin (MRLN). The inhibition is blocked by VMP1. Enhanced by STRIT1/DWORF; STRIT1 increases activity by displacing sarcolipin (SLN), phospholamban (PLN) and myoregulin (MRLN). Stabilizes SERCA2 in its E2 state. Functionally, this magnesium-dependent enzyme catalyzes the hydrolysis of ATP coupled with the translocation of calcium from the cytosol to the sarcoplasmic reticulum lumen. Involved in autophagy in response to starvation. Upon interaction with VMP1 and activation, controls ER-isolation membrane contacts for autophagosome formation. Also modulates ER contacts with lipid droplets, mitochondria and endosomes. In coordination with FLVCR2 mediates heme-stimulated switching from mitochondrial ATP synthesis to thermogenesis. Its function is as follows. Involved in the regulation of the contraction/relaxation cycle. Acts as a regulator of TNFSF11-mediated Ca(2+) signaling pathways via its interaction with TMEM64 which is critical for the TNFSF11-induced CREB1 activation and mitochondrial ROS generation necessary for proper osteoclast generation. Association between TMEM64 and SERCA2 in the ER leads to cytosolic Ca(2+) spiking for activation of NFATC1 and production of mitochondrial ROS, thereby triggering Ca(2+) signaling cascades that promote osteoclast differentiation and activation. The protein is Sarcoplasmic/endoplasmic reticulum calcium ATPase 2 (ATP2A2) of Oryctolagus cuniculus (Rabbit).